Reading from the N-terminus, the 153-residue chain is Phosphopantetheine adenylyltransferase (153 aa).

Residue Ser11 participates in substrate binding. Residues 11 to 12 and His19 contribute to the ATP site; that span reads SF. Residues Lys43, Thr75, and Arg89 each contribute to the substrate site. ATP contacts are provided by residues 90–92, Glu100, and 124–130; these read GIR and LSFISSS.

This sequence belongs to the bacterial CoaD family. As to quaternary structure, homohexamer. It depends on Mg(2+) as a cofactor.

Its subcellular location is the cytoplasm. It carries out the reaction (R)-4'-phosphopantetheine + ATP + H(+) = 3'-dephospho-CoA + diphosphate. It functions in the pathway cofactor biosynthesis; coenzyme A biosynthesis; CoA from (R)-pantothenate: step 4/5. Its function is as follows. Reversibly transfers an adenylyl group from ATP to 4'-phosphopantetheine, yielding dephospho-CoA (dPCoA) and pyrophosphate. This chain is Phosphopantetheine adenylyltransferase, found in Porphyromonas gingivalis (strain ATCC 33277 / DSM 20709 / CIP 103683 / JCM 12257 / NCTC 11834 / 2561).